Reading from the N-terminus, the 495-residue chain is UDP-glycosyltransferase 71B7 (495 aa).

UDP-alpha-D-glucose-binding positions include serine 284, alanine 351 to glutamine 353, histidine 368 to glutamate 376, and tyrosine 390 to glutamine 393.

This sequence belongs to the UDP-glycosyltransferase family.

In Arabidopsis thaliana (Mouse-ear cress), this protein is UDP-glycosyltransferase 71B7 (UGT71B7).